The sequence spans 218 residues: Ribose-5-phosphate isomerase A (218 aa).

Substrate-binding positions include 28-31 (TGST), 81-84 (DGAD), and 94-97 (KGGG). The active-site Proton acceptor is Glu-103. Residue Lys-121 participates in substrate binding.

It belongs to the ribose 5-phosphate isomerase family. As to quaternary structure, homodimer.

It catalyses the reaction aldehydo-D-ribose 5-phosphate = D-ribulose 5-phosphate. It participates in carbohydrate degradation; pentose phosphate pathway; D-ribose 5-phosphate from D-ribulose 5-phosphate (non-oxidative stage): step 1/1. Catalyzes the reversible conversion of ribose-5-phosphate to ribulose 5-phosphate. The protein is Ribose-5-phosphate isomerase A of Vibrio campbellii (strain ATCC BAA-1116).